The following is a 576-amino-acid chain: MSLIGGGSDCAAGSNPLAQFTKHTQHDTSLQQSMRNGEFQQGNQRMMRNESTMSPMERQQMDQFMQQQNNPAFNFQPMQHELNVMQQNMNAPQQVANNSWNQEFRMKDPMVANAPSAQVQTPVQSTNWAQDFQQAGPEVQHHAQQHQHPILSVPGVRAGIYGGGRLMGGSMMNRAAQMQQQNPAQAQTSEQSQTQWEDQFKDIESMLNSKTQEPKTKQQEQNTFEQVWDDIQVSYADVELTNDQFQAQWEKDFAQYAEGRLNYGEYKYEEKNQFRNDPDAYEIGMRLMESGAKLSEAGLAFEAAVQQDPKHVDAWLKLGEVQTQNEKESDGIAALEKCLELDPTNLAALMTLAISYINDGYDNAAYATLERWIETKYPDIASRARSSNPDLDGGDRIEQNKRVTELFMKAAQLSPDVASMDADVQTGLGVLFYSMEEFDKTIDCFKAAIEVEPDKALNWNRLGAALANYNKPEEAVEAYSRALQLNPNFVRARYNLGVSFINMGRYKEAVEHLLTGISLHEVEGVDASEMSSNQGLQNNALVETLKRAFLGMNRRDLVDKVYPGMGLAQFRKMFDF.

Residue C10 forms a Glycyl cysteine thioester (Cys-Gly) (interchain with G-Cter in ubiquitin) linkage. The interval 11–33 (AAGSNPLAQFTKHTQHDTSLQQS) is amphipathic helix 1 (AH1). A Glycyl lysine isopeptide (Lys-Gly) (interchain with G-Cter in ubiquitin) cross-link involves residue K22. The tract at residues 58–75 (RQQMDQFMQQQNNPAFNF) is amphipathic helix 2 (AH2). Short sequence motifs (wxxxF/Y motif) lie at residues 100-104 (WNQEF) and 128-132 (WAQDF). Residues 176–195 (AQMQQQNPAQAQTSEQSQTQ) form a disordered region. The WxxxF/Y motif 3 signature appears at 196–200 (WEDQF). Residues 224–240 (FEQVWDDIQVSYADVEL) are amphipathic helix 4 (AH4). The WxxxF/Y motif 4 signature appears at 249–253 (WEKDF). 7 TPR repeats span residues 278–311 (PDAY…DPKH), 312–345 (VDAW…DPTN), 346–383 (LAAL…IASR), 384–421 (ARSS…ASMD), 422–455 (ADVQ…EPDK), 456–489 (ALNW…NPNF), and 490–523 (VRAR…HEVE).

It belongs to the peroxisomal targeting signal receptor family. Interacts (via WxxxF/Y and LVxEF motifs) with PEX14; promoting translocation through the PEX13-PEX14 docking complex. Interacts with PEX8. In terms of processing, a disulfide bond is created between Cys-10 and Cys-338 or Cys-444. Post-translationally, monoubiquitinated at Cys-10 by PEX2 during PEX5 passage through the retrotranslocation channel: monoubiquitination acts as a signal for PEX5 extraction and is required for proper export from peroxisomes and recycling. When PEX5 recycling is compromised, polyubiquitinated at Lys-22 by PEX10 during its passage through the retrotranslocation channel, leading to its degradation.

It localises to the peroxisome membrane. The protein resides in the cytoplasm. It is found in the cytosol. The protein localises to the peroxisome matrix. Its function is as follows. Receptor that mediates peroxisomal import of proteins containing a C-terminal PTS1-type tripeptide peroxisomal targeting signal (SKL-type). Binds to cargo proteins containing a PTS1 peroxisomal targeting signal in the cytosol, and translocates them into the peroxisome matrix by passing through the peroxisomal docking complex along with cargo proteins. PEX5 receptor is then retrotranslocated into the cytosol, leading to release of bound cargo in the peroxisome matrix, and reset for a subsequent peroxisome import cycle. Required for PEX7 ubiquitination. The chain is Peroxisomal targeting signal receptor from Komagataella phaffii (strain GS115 / ATCC 20864) (Yeast).